The primary structure comprises 341 residues: Short chain dehydrogenase FGM9 (341 aa).

Leu-38, Lys-63, Asp-88, and Asn-114 together coordinate NADP(+). Active-site proton donor residues include Ser-167 and Tyr-200. The NADP(+) site is built by Tyr-200 and Lys-204. Lys-204 acts as the Lowers pKa of active site Tyr in catalysis.

The protein belongs to the short-chain dehydrogenases/reductases (SDR) family.

Its pathway is secondary metabolite biosynthesis. Its function is as follows. Short chain dehydrogenase; part of the Fg3_54/C64 gene cluster that mediates the biosynthesis of the octapeptide fusaoctaxin A, a virulence factor that is required for cell-to-cell invasiveness of plant host. The 2 nonribosomal peptide synthetases NRPS9 and NRPS5 form an assembly line which likely utilizes GABA as a starter unit (loaded on the unique module M1 of NRPS9) and sequentially incorporates seven extender units composed of the residues L-Ala, L-allo-Ile, L-Ser, L-Val, L-Ser, L-Leu and L-Leu, respectively. During the process, each of the residues that are tethered on modules M3-M7 of NRPS5 containing an E domain can undergo an epimerization reaction to produce a D-configuration before the transpeptidation reaction occurs. The elongation of the peptidyl chain might be terminated by module M8-mediated L-Leu incorporation, followed by R domain-catalyzed 4 electron reduction to release the resulting octapeptide from the assembly line as an alcohol. Fusaoctaxin A is cleaved by the cluster specific ABC transporter FGM5 to the pentapeptide fusapentaxin A and the tripeptide fusatrixin A. The other enzymes from the cluster, FGM1, FGM2, FGM3 and FGM9 seem not to be involved in the biosynthesis of fusaoctaxin A and their functions have still to be determined. This chain is Short chain dehydrogenase FGM9, found in Gibberella zeae (strain ATCC MYA-4620 / CBS 123657 / FGSC 9075 / NRRL 31084 / PH-1) (Wheat head blight fungus).